Consider the following 317-residue polypeptide: Melanocyte-stimulating hormone receptor (317 aa).

Residues 1–37 (MPVQGSQRRLLGSLNSTPTATPHLGLAANQTGARCLE) lie on the Extracellular side of the membrane. Asn29 is a glycosylation site (N-linked (GlcNAc...) asparagine). A helical transmembrane segment spans residues 38-63 (VSIPDGLFLSLGLVSLVENVLVVTAI). Residues 64 to 72 (AKNRNLHSP) lie on the Cytoplasmic side of the membrane. The helical transmembrane segment at 73 to 93 (MYCFICCLALSDLLVSGSNML) threads the bilayer. Topologically, residues 94-118 (ETAVTLLLEAGALAARAAVVQQLDN) are extracellular. A helical transmembrane segment spans residues 119-140 (VIDVITCSSMLSSLCFLGAIAV). At 141–163 (DRYISIFYALRYHSIVTLPRARR) the chain is on the cytoplasmic side. The helical transmembrane segment at 164 to 183 (AVAAIWVASVLFSMLFIAYY) threads the bilayer. Topologically, residues 184 to 191 (DHAAVLLC) are extracellular. Residues 192-211 (LVVFFLAMLVLMAVLYVHML) traverse the membrane as a helical segment. Residues 212-240 (ARACQHAQGIARLHKRQRPAHQGFGLKGA) lie on the Cytoplasmic side of the membrane. The chain crosses the membrane as a helical span at residues 241–266 (ATLTILLGIFFLCWGPFFLHLTLIVL). At 267–279 (CPQHPTCSCIFKN) the chain is on the extracellular side. A helical membrane pass occupies residues 280-300 (FNLFLALIICNAIIDPLIYAF). The Cytoplasmic portion of the chain corresponds to 301–317 (RSQELRRTLKEVLLCSW). Residue Cys315 is the site of S-palmitoyl cysteine attachment.

This sequence belongs to the G-protein coupled receptor 1 family. In terms of assembly, interacts with MGRN1, but does not undergo MGRN1-mediated ubiquitination; this interaction competes with GNAS-binding and thus inhibits agonist-induced cAMP production. Interacts with OPN3; the interaction results in a decrease in MC1R-mediated cAMP signaling and ultimately a decrease in melanin production in melanocytes.

Its subcellular location is the cell membrane. In terms of biological role, receptor for MSH (alpha, beta and gamma) and ACTH. The activity of this receptor is mediated by G proteins which activate adenylate cyclase. Mediates melanogenesis, the production of eumelanin (black/brown) and phaeomelanin (red/yellow), via regulation of cAMP signaling in melanocytes. The chain is Melanocyte-stimulating hormone receptor (MC1R) from Miopithecus talapoin (Angolan talapoin).